A 306-amino-acid chain; its full sequence is Homoserine kinase (306 aa).

84-94 (PAGLGLGSSGA) contacts ATP.

Belongs to the GHMP kinase family. Homoserine kinase subfamily.

The protein localises to the cytoplasm. The enzyme catalyses L-homoserine + ATP = O-phospho-L-homoserine + ADP + H(+). It functions in the pathway amino-acid biosynthesis; L-threonine biosynthesis; L-threonine from L-aspartate: step 4/5. In terms of biological role, catalyzes the ATP-dependent phosphorylation of L-homoserine to L-homoserine phosphate. The protein is Homoserine kinase of Sulfolobus acidocaldarius (strain ATCC 33909 / DSM 639 / JCM 8929 / NBRC 15157 / NCIMB 11770).